A 349-amino-acid chain; its full sequence is Ureidoglycolate dehydrogenase (NAD(+)) (349 aa).

The Proton acceptor role is filled by H116. Residues S140, 174–176 (DMA), K224, and 306–308 (GQD) each bind NAD(+).

The protein belongs to the LDH2/MDH2 oxidoreductase family. Homodimer.

It is found in the cytoplasm. The catalysed reaction is (S)-ureidoglycolate + NAD(+) = N-carbamoyl-2-oxoglycine + NADH + H(+). It functions in the pathway nitrogen metabolism; (S)-allantoin degradation; oxalurate from (S)-ureidoglycolate: step 1/1. AllD plays a pivotal role as a metabolic branch-point enzyme in nitrogen utilization via the assimilation of allantoin. It is able to utilize allantoin as a sole source of nitrogen under anaerobic conditions. Catalyzes the oxidation of ureidoglycolate to oxalurate. The sequence is that of Ureidoglycolate dehydrogenase (NAD(+)) from Escherichia coli (strain K12).